A 149-amino-acid chain; its full sequence is Hydroalkoxylation enzyme phnH (149 aa).

An N-terminal signal peptide occupies residues 1-18; sequence MKFTYLVSLAAFAVTALG. N-linked (GlcNAc...) asparagine glycans are attached at residues Asn-33 and Asn-127.

As to quaternary structure, homotetramer.

The enzyme catalyses 2,4,7,9-tetrahydroxy-6-methyl-8-(2-methylbut-3-en-2-yl)-1-oxo-1H-phenalen-3-ol = (2'R)-atrovenetin. Its pathway is secondary metabolite biosynthesis. In terms of biological role, hydroalkoxylation enzyme; part of the gene cluster that mediates the biosynthesis of phenalenones such as herqueinone, compounds that have been reported to treat tumors, bacterial infections and/or mycoses, and rheumatic diseases. The non-reducing polyketide synthase phnA synthesizes the heptaketide backbone and cyclizes it into the angular, hemiketal-containing naphtho-gamma-pyrone prephenalenone. The product template (PT) domain of phnA catalyzes only the C4-C9 aldol condensation, which is unprecedented among known PT domains. The transformation of prephenalenone to phenalenones requires an FAD-dependent monooxygenase phnB, which catalyzes the C2 aromatic hydroxylation of prephenalenone and ring opening of the gamma-pyrone ring simultaneously. Subsequent intramolecular deprotonation of C3 phenolic oxygen accelerates phenalenone ring closure to yield the tricyclic phenalenone core with a C2 hydroxylation. The prenyltransferase phnF further catalyzes reverse C-prenylation of phenalenone by direct electrophilic substitution at C6, or possibly via first a forward O-prenylation of a neighboring phenol in phenalenone, followed by a Claisen rearrangement. The hydroalkoxylation enzyme phnH catalyzes the 5-exo-trig cyclization via acid catalysis after the spontaneous deprotonation of 7-OH, which leads to the formation of the dihydrobenzofuran atrovenetin. Atrovenetin is further converted to deoxyherqueinone by the O-methyltransferase phnC which can methylate C2-OH to stabilize the northern portion of the phenalenone core. Finally, the oxidoreductase phnG converts deoxyherqueinone to herqueinone via C6 hydroxylation. This Penicillium herquei protein is Hydroalkoxylation enzyme phnH.